Reading from the N-terminus, the 396-residue chain is Immunoglobulin heavy constant gamma 4 (396 aa).

The tract at residues 1-98 (ASTKGPSVFP…PSNTKVDKRV (98 aa)) is CH1. Over 1–347 (ASTKGPSVFP…DGELDGLWTT (347 aa)) the chain is Extracellular. 3 Ig-like domains span residues 6 to 99 (PSVF…KRVE), 118 to 217 (PSVF…KTIS), and 226 to 322 (PQVY…KSLS). C27 and C83 form a disulfide bridge. Residues 99–110 (ESKYGPPCPSCP) are hinge. A CH2 region spans residues 111–220 (APEFLGGPSV…SIEKTISKAK (110 aa)). Intrachain disulfides connect C141–C201 and C247–C305. N-linked (GlcNAc...) (complex) asparagine glycosylation is present at N177. Residues 221–327 (GQPREPQVYT…QKSLSLSLEL (107 aa)) form a CH3 region. A helical membrane pass occupies residues 348 to 368 (ITIFITLFLLSVCYSATVTFF). Topologically, residues 369–396 (KVKWIFSSVVDLKQTIVPDYRNMIRQGA) are cytoplasmic.

Immunoglobulins are composed of two identical heavy chains and two identical light chains; disulfide-linked. Post-translationally, glycosylation on Asn-177 is required for interaction with Fc receptors and ability to activate the complement pathway. (Microbial infection) Deglycosylation on Asn-177 by S.pyogenes EndoS or Endos2 endoglucosidases prevents interaction between immunoglobulin-gamma (IgG) and Fc receptors, impairing ability to activate the complement pathway.

The protein resides in the secreted. Its subcellular location is the cell membrane. In terms of biological role, constant region of immunoglobulin heavy chains. Immunoglobulins, also known as antibodies, are membrane-bound or secreted glycoproteins produced by B lymphocytes. In the recognition phase of humoral immunity, the membrane-bound immunoglobulins serve as receptors which, upon binding of a specific antigen, trigger the clonal expansion and differentiation of B lymphocytes into immunoglobulins-secreting plasma cells. Secreted immunoglobulins mediate the effector phase of humoral immunity, which results in the elimination of bound antigens. The antigen binding site is formed by the variable domain of one heavy chain, together with that of its associated light chain. Thus, each immunoglobulin has two antigen binding sites with remarkable affinity for a particular antigen. The variable domains are assembled by a process called V-(D)-J rearrangement and can then be subjected to somatic hypermutations which, after exposure to antigen and selection, allow affinity maturation for a particular antigen. The polypeptide is Immunoglobulin heavy constant gamma 4 (Homo sapiens (Human)).